The chain runs to 59 residues: Photosystem II reaction center protein K (59 aa).

A propeptide spanning residues 1–22 is cleaved from the precursor; sequence MLNIFSLICLSSALHSSSFFFA. A helical membrane pass occupies residues 38-58; it reads MPVIPVLFFLLALVWQAAVSF.

Belongs to the PsbK family. PSII is composed of 1 copy each of membrane proteins PsbA, PsbB, PsbC, PsbD, PsbE, PsbF, PsbH, PsbI, PsbJ, PsbK, PsbL, PsbM, PsbT, PsbX, PsbY, PsbZ, Psb30/Ycf12, at least 3 peripheral proteins of the oxygen-evolving complex and a large number of cofactors. It forms dimeric complexes.

The protein localises to the plastid. It is found in the chloroplast thylakoid membrane. One of the components of the core complex of photosystem II (PSII). PSII is a light-driven water:plastoquinone oxidoreductase that uses light energy to abstract electrons from H(2)O, generating O(2) and a proton gradient subsequently used for ATP formation. It consists of a core antenna complex that captures photons, and an electron transfer chain that converts photonic excitation into a charge separation. This chain is Photosystem II reaction center protein K, found in Piper cenocladum (Ant piper).